The sequence spans 104 residues: Small ribosomal subunit protein uS10 (104 aa).

This sequence belongs to the universal ribosomal protein uS10 family. In terms of assembly, part of the 30S ribosomal subunit.

In terms of biological role, involved in the binding of tRNA to the ribosomes. The polypeptide is Small ribosomal subunit protein uS10 (Gloeobacter violaceus (strain ATCC 29082 / PCC 7421)).